Reading from the N-terminus, the 285-residue chain is Sulfur carrier protein TtuD (285 aa).

Rhodanese domains follow at residues 20–127 (EDPK…PLTT) and 161–281 (KEGK…VPIA). Cys240 is modified (cysteine persulfide).

Cys-240 can accept a sulfur atom as persulfide forms from cysteine desulfurases IscS and SufS.

It functions in the pathway tRNA modification. Its function is as follows. Required for the efficient 2-thiolation of 5-methyluridine residue at position 54 in the T loop of tRNAs, leading to 5-methyl-2-thiouridine (m(5)s(2)U or s(2)T). TtuD is a sulfur carrier protein that has a role to direct sulfur flow from cysteine desulfurases to m(5)s(2)U synthesis in vivo. It enhances the cysteine desulfurase activity of IscS and SufS, as well as the formation of thiocarboxylated TtuB (TtuB-COSH) in the presence of these desulfurases. The chain is Sulfur carrier protein TtuD from Thermus thermophilus (strain ATCC BAA-163 / DSM 7039 / HB27).